We begin with the raw amino-acid sequence, 130 residues long: Small ribosomal subunit protein uS9 (130 aa).

It belongs to the universal ribosomal protein uS9 family.

This Xylella fastidiosa (strain 9a5c) protein is Small ribosomal subunit protein uS9.